A 254-amino-acid polypeptide reads, in one-letter code: uncharacterized protein (254 aa).

Residues 6-239 enclose the ABC transporter domain; that stretch reads LSVDGVEFAY…NIKAVYGVDA (234 aa). 38-45 serves as a coordination point for ATP; the sequence is GVNGAGKS.

It belongs to the ABC transporter superfamily.

This is an uncharacterized protein from Methanocaldococcus jannaschii (strain ATCC 43067 / DSM 2661 / JAL-1 / JCM 10045 / NBRC 100440) (Methanococcus jannaschii).